The chain runs to 471 residues: DENN domain-containing protein 2D (471 aa).

The uDENN domain occupies 55 to 204 (EYLLVVSLKK…AFPAPGKTVT (150 aa)). One can recognise a cDENN domain in the interval 226–359 (HLEHVDFSSL…LQDDILDSLG (134 aa)). The dDENN domain occupies 361–445 (GINELKTAEQ…QEAEKSKNPP (85 aa)).

As to expression, in bronchial mucosa, mainly expressed in ciliated and basal epithelial cells and weakly in alveolar cells (at protein level). Tends to be down-regulated in lung cancers, immortalized bronchial epithelial cell lines and precancerous lesions.

The protein resides in the cytoplasm. In terms of biological role, guanine nucleotide exchange factor (GEF) which may activate RAB9A and RAB9B. Promotes the exchange of GDP to GTP, converting inactive GDP-bound Rab proteins into their active GTP-bound form. The chain is DENN domain-containing protein 2D (DENND2D) from Homo sapiens (Human).